The chain runs to 314 residues: Homoserine O-succinyltransferase (314 aa).

The Acyl-thioester intermediate role is filled by Cys142. The substrate site is built by Lys163 and Ser192. His235 serves as the catalytic Proton acceptor. The active site involves Glu237. Arg249 lines the substrate pocket.

This sequence belongs to the MetA family.

Its subcellular location is the cytoplasm. The enzyme catalyses L-homoserine + succinyl-CoA = O-succinyl-L-homoserine + CoA. The protein operates within amino-acid biosynthesis; L-methionine biosynthesis via de novo pathway; O-succinyl-L-homoserine from L-homoserine: step 1/1. In terms of biological role, transfers a succinyl group from succinyl-CoA to L-homoserine, forming succinyl-L-homoserine. The protein is Homoserine O-succinyltransferase of Shewanella sediminis (strain HAW-EB3).